Consider the following 134-residue polypeptide: Small ribosomal subunit protein uS11 (134 aa).

Positions 114 to 134 (DVTPVPSDSTRRKGGRRGRRL) are disordered. The segment covering 125–134 (RKGGRRGRRL) has biased composition (basic residues).

This sequence belongs to the universal ribosomal protein uS11 family.

The protein is Small ribosomal subunit protein uS11 (RPS14) of Candida albicans (Yeast).